The following is a 388-amino-acid chain: Succinate--CoA ligase [ADP-forming] subunit beta (388 aa).

Residues 9 to 244 (KEILRKFGVA…PDEEDPKETQ (236 aa)) enclose the ATP-grasp domain. Residues Lys-46, 53–55 (GRG), Glu-99, Cys-102, and Glu-107 each bind ATP. Mg(2+) is bound by residues Asn-199 and Asp-213. Substrate-binding positions include Asn-264 and 321–323 (GIM).

It belongs to the succinate/malate CoA ligase beta subunit family. Heterotetramer of two alpha and two beta subunits. Mg(2+) serves as cofactor.

The catalysed reaction is succinate + ATP + CoA = succinyl-CoA + ADP + phosphate. It catalyses the reaction GTP + succinate + CoA = succinyl-CoA + GDP + phosphate. The protein operates within carbohydrate metabolism; tricarboxylic acid cycle; succinate from succinyl-CoA (ligase route): step 1/1. Functionally, succinyl-CoA synthetase functions in the citric acid cycle (TCA), coupling the hydrolysis of succinyl-CoA to the synthesis of either ATP or GTP and thus represents the only step of substrate-level phosphorylation in the TCA. The beta subunit provides nucleotide specificity of the enzyme and binds the substrate succinate, while the binding sites for coenzyme A and phosphate are found in the alpha subunit. This Anaeromyxobacter dehalogenans (strain 2CP-1 / ATCC BAA-258) protein is Succinate--CoA ligase [ADP-forming] subunit beta.